Here is a 151-residue protein sequence, read N- to C-terminus: 3-hydroxyacyl-[acyl-carrier-protein] dehydratase FabZ (151 aa).

Residue His58 is part of the active site.

This sequence belongs to the thioester dehydratase family. FabZ subfamily.

It localises to the cytoplasm. It carries out the reaction a (3R)-hydroxyacyl-[ACP] = a (2E)-enoyl-[ACP] + H2O. Functionally, involved in unsaturated fatty acids biosynthesis. Catalyzes the dehydration of short chain beta-hydroxyacyl-ACPs and long chain saturated and unsaturated beta-hydroxyacyl-ACPs. The protein is 3-hydroxyacyl-[acyl-carrier-protein] dehydratase FabZ of Histophilus somni (strain 129Pt) (Haemophilus somnus).